The chain runs to 461 residues: Putative long chain fatty acid-CoA ligase VraA (461 aa).

The protein belongs to the ATP-dependent AMP-binding enzyme family.

In Staphylococcus haemolyticus (strain JCSC1435), this protein is Putative long chain fatty acid-CoA ligase VraA (vraA).